A 477-amino-acid chain; its full sequence is Actin-related protein 7 (477 aa).

The protein belongs to the actin family. As to quaternary structure, forms a heterodimer with ARP9. Interacts with NPL6. Component of the two forms of the RSC complex composed of at least either RSC1 or RSC2, and ARP7, ARP9, LDB7, NPL6, RSC3, RSC30, RSC4, RSC58, RSC6, RSC8, RSC9, SFH1, STH1, HTL1 and probably RTT102. The complexes interact with histone and histone variant components of centromeric chromatin. Component of the SWI/SNF global transcription activator complex. The 1.14 MDa SWI/SNF complex is composed of 11 different subunits: one copy each of SWI1, SNF2/SWI2, SNF5, SNF12/SWP73, ARP7/SWP61, ARP9/SWP59; two copies each of SWI3, SNF6, SNF11, SWP82; and three copies of TAF14/SWP29.

The protein localises to the nucleus. Component of the chromatin structure remodeling complex (RSC), which is involved in transcription regulation and nucleosome positioning. RSC is responsible for the transfer of a histone octamer from a nucleosome core particle to naked DNA. The reaction requires ATP and involves an activated RSC-nucleosome intermediate. Remodeling reaction also involves DNA translocation, DNA twist and conformational change. As a reconfigurer of centromeric and flanking nucleosomes, RSC complex is required both for proper kinetochore function in chromosome segregation and, via a PKC1-dependent signaling pathway, for organization of the cellular cytoskeleton. This subunit is involved in transcriptional regulation. Heterodimer of ARP7 and ARP9 functions with HMG box proteins to facilitate proper chromatin architecture. Heterodimer formation is necessary for assembly into RSC complex. Part of the SWI/SNF complex, an ATP-dependent chromatin remodeling complex, is required for the positive and negative regulation of gene expression of a large number of genes. It changes chromatin structure by altering DNA-histone contacts within a nucleosome, leading eventually to a change in nucleosome position, thus facilitating or repressing binding of gene-specific transcription factors. The protein is Actin-related protein 7 (ARP7) of Saccharomyces cerevisiae (strain ATCC 204508 / S288c) (Baker's yeast).